We begin with the raw amino-acid sequence, 645 residues long: UvrABC system protein C (645 aa).

A disordered region spans residues 1-20; that stretch reads MTDLPPHSSHHPADQGEPLV. A GIY-YIG domain is found at 40–118; the sequence is YSPGVYRMLS…IKRMKPRFNI (79 aa). The UVR domain maps to 228 to 263; the sequence is TELQQRLVAEMEQASQELNYERAASIRDRIRGFASI.

It belongs to the UvrC family. As to quaternary structure, interacts with UvrB in an incision complex.

It is found in the cytoplasm. In terms of biological role, the UvrABC repair system catalyzes the recognition and processing of DNA lesions. UvrC both incises the 5' and 3' sides of the lesion. The N-terminal half is responsible for the 3' incision and the C-terminal half is responsible for the 5' incision. In Gluconobacter oxydans (strain 621H) (Gluconobacter suboxydans), this protein is UvrABC system protein C.